Reading from the N-terminus, the 461-residue chain is Bifunctional protein HldE (461 aa).

The ribokinase stretch occupies residues 1-315 (MKKILVIGDL…LILNQTHPKI (315 aa)). 191–194 (NRTE) contributes to the ATP binding site. The active site involves aspartate 260. Residues 332–461 (FTNGCFDLLH…IEKIKRTCND (130 aa)) are cytidylyltransferase.

It in the N-terminal section; belongs to the carbohydrate kinase PfkB family. This sequence in the C-terminal section; belongs to the cytidylyltransferase family. Homodimer.

The enzyme catalyses D-glycero-beta-D-manno-heptose 7-phosphate + ATP = D-glycero-beta-D-manno-heptose 1,7-bisphosphate + ADP + H(+). It catalyses the reaction D-glycero-beta-D-manno-heptose 1-phosphate + ATP + H(+) = ADP-D-glycero-beta-D-manno-heptose + diphosphate. Its pathway is nucleotide-sugar biosynthesis; ADP-L-glycero-beta-D-manno-heptose biosynthesis; ADP-L-glycero-beta-D-manno-heptose from D-glycero-beta-D-manno-heptose 7-phosphate: step 1/4. The protein operates within nucleotide-sugar biosynthesis; ADP-L-glycero-beta-D-manno-heptose biosynthesis; ADP-L-glycero-beta-D-manno-heptose from D-glycero-beta-D-manno-heptose 7-phosphate: step 3/4. It participates in bacterial outer membrane biogenesis; LPS core biosynthesis. Functionally, catalyzes the phosphorylation of D-glycero-D-manno-heptose 7-phosphate at the C-1 position to selectively form D-glycero-beta-D-manno-heptose-1,7-bisphosphate. Its function is as follows. Catalyzes the ADP transfer from ATP to D-glycero-beta-D-manno-heptose 1-phosphate, yielding ADP-D-glycero-beta-D-manno-heptose. This Helicobacter pylori (strain ATCC 700392 / 26695) (Campylobacter pylori) protein is Bifunctional protein HldE.